Reading from the N-terminus, the 1022-residue chain is Sodium/potassium-transporting ATPase subunit alpha-1 (1022 aa).

The propeptide occupies 1-5; that stretch reads MGRGT. The span at 1–10 shows a compositional bias: basic and acidic residues; sequence MGRGTGHDQY. Positions 1 to 34 are disordered; sequence MGRGTGHDQYELAATSEGGRKKKRDKKKKDMDDL. Topologically, residues 6-86 are cytoplasmic; that stretch reads GHDQYELAAT…NALTPPPTTP (81 aa). S16 is subject to Phosphoserine; by PKC. The segment at 81 to 83 is interaction with phosphoinositide-3 kinase; it reads PPP. A helical membrane pass occupies residues 87–107; sequence EWVKFCRQLFGGFSMLLWIGA. Residues 108–130 are Extracellular-facing; the sequence is ILCFLAYGIQAASEDEPANDNLY. A helical membrane pass occupies residues 131-151; it reads LGVVLSAVVIITGCFSYYQEA. Topologically, residues 152-287 are cytoplasmic; that stretch reads KSSRIMDSFK…VGRTPISIEI (136 aa). A disordered region spans residues 213–234; sequence DNSSLTGESEPQTRSPDFSNEN. Residues 288 to 307 form a helical membrane-spanning segment; the sequence is EHFIHIITGVAVFLGVSFFI. Topologically, residues 308-319 are extracellular; the sequence is LSLILGYAWLEA. Residues 320–337 form a helical membrane-spanning segment; sequence VIFLIGIIVANVPEGLLA. Over 338–771 the chain is Cytoplasmic; that stretch reads TVTVCLTLTA…EEGRLIFDNL (434 aa). D375 serves as the catalytic 4-aspartylphosphate intermediate. Residue K486 coordinates ATP. Residues D716 and D720 each contribute to the Mg(2+) site. The chain crosses the membrane as a helical span at residues 772-791; that stretch reads KKSIAYTLTSNIPEITPFLL. Over 792 to 801 the chain is Extracellular; sequence FIIANIPLPL. A helical membrane pass occupies residues 802–822; the sequence is GTVTILCIDLGTDMVPAISLA. Residues 823–842 lie on the Cytoplasmic side of the membrane; it reads YEAAESDIMKRQPRNPRTDK. The chain crosses the membrane as a helical span at residues 843–865; the sequence is LVNERLISIAYGQIGMMQATAGF. Over 866–917 the chain is Extracellular; that stretch reads FTYFVILAENGFLPSTLLGIRVKWDDKYVNDLEDSYGQQWTYEQRKIVEYTC. Residues 918 to 937 traverse the membrane as a helical segment; that stretch reads HTSFFASIVIVQWADLIICK. Topologically, residues 938–950 are cytoplasmic; it reads TRRNSIIQQGMKN. Position 942 is a phosphoserine; by PKA (S942). A helical transmembrane segment spans residues 951-969; it reads KILIFGLFEETALAAFLSY. At 970–984 the chain is on the extracellular side; the sequence is CPGMDVALRMYPLKP. The chain crosses the membrane as a helical span at residues 985-1005; that stretch reads SWWFCAFPYSLLIFLYDEARR. Residues 1006-1022 lie on the Cytoplasmic side of the membrane; it reads FILRRNPDGWVERETYY.

This sequence belongs to the cation transport ATPase (P-type) (TC 3.A.3) family. Type IIC subfamily. The sodium/potassium-transporting ATPase is composed of a catalytic alpha subunit, an auxiliary non-catalytic beta subunit and an additional regulatory subunit.

The protein resides in the cell membrane. The protein localises to the sarcolemma. The catalysed reaction is K(+)(out) + Na(+)(in) + ATP + H2O = K(+)(in) + Na(+)(out) + ADP + phosphate + H(+). Its function is as follows. This is the catalytic component of the active enzyme, which catalyzes the hydrolysis of ATP coupled with the exchange of sodium and potassium ions across the plasma membrane. This action creates the electrochemical gradient of sodium and potassium ions, providing the energy for active transport of various nutrients. In Anguilla anguilla (European freshwater eel), this protein is Sodium/potassium-transporting ATPase subunit alpha-1 (atp1a1).